The primary structure comprises 71 residues: MSKQEMLSFSGIVEDLLPNAMFRVKLENGHIVTAHAAGKLRKNRIRVLQGDKVQVEMTPYDLTKGRITFRG.

The S1-like domain occupies 1–71 (MSKQEMLSFS…LTKGRITFRG (71 aa)).

The protein belongs to the IF-1 family. In terms of assembly, component of the 30S ribosomal translation pre-initiation complex which assembles on the 30S ribosome in the order IF-2 and IF-3, IF-1 and N-formylmethionyl-tRNA(fMet); mRNA recruitment can occur at any time during PIC assembly.

Its subcellular location is the cytoplasm. Its function is as follows. One of the essential components for the initiation of protein synthesis. Stabilizes the binding of IF-2 and IF-3 on the 30S subunit to which N-formylmethionyl-tRNA(fMet) subsequently binds. Helps modulate mRNA selection, yielding the 30S pre-initiation complex (PIC). Upon addition of the 50S ribosomal subunit IF-1, IF-2 and IF-3 are released leaving the mature 70S translation initiation complex. The chain is Translation initiation factor IF-1 from Pelagibacter ubique (strain HTCC1062).